We begin with the raw amino-acid sequence, 809 residues long: Glycerol-3-phosphate acyltransferase (809 aa).

The HXXXXD motif motif lies at 306–311 (HRSHMD).

It belongs to the GPAT/DAPAT family.

The protein localises to the cell inner membrane. It carries out the reaction sn-glycerol 3-phosphate + an acyl-CoA = a 1-acyl-sn-glycero-3-phosphate + CoA. It functions in the pathway phospholipid metabolism; CDP-diacylglycerol biosynthesis; CDP-diacylglycerol from sn-glycerol 3-phosphate: step 1/3. This Vibrio vulnificus (strain YJ016) protein is Glycerol-3-phosphate acyltransferase.